Reading from the N-terminus, the 433-residue chain is Probable imidazolonepropionase (433 aa).

2 residues coordinate 4-imidazolone-5-propanoate: Y160 and H193. Y160 is an N-formimidoyl-L-glutamate binding site. H261 serves as a coordination point for Fe(3+). H261 contributes to the Zn(2+) binding site. Residue E264 participates in 4-imidazolone-5-propanoate binding. Residue D335 participates in Fe(3+) binding. A Zn(2+)-binding site is contributed by D335. Residue N337 participates in N-formimidoyl-L-glutamate binding.

Belongs to the metallo-dependent hydrolases superfamily. HutI family. Requires Zn(2+) as cofactor. It depends on Fe(3+) as a cofactor.

It catalyses the reaction 4-imidazolone-5-propanoate + H2O = N-formimidoyl-L-glutamate. The protein operates within amino-acid degradation; L-histidine degradation into L-glutamate; N-formimidoyl-L-glutamate from L-histidine: step 3/3. This Danio rerio (Zebrafish) protein is Probable imidazolonepropionase (amdhd1).